We begin with the raw amino-acid sequence, 189 residues long: MSRIGKLPISIPAGVTVTLKDDVVTVKGPKGELSQYVNPAINVAIEDGHVTLTENEKEMIDNPKQKHAFHGLYRSLVHNMVVGVSEGYKKELELVGVGYRASNQGNIIELALGYTHNIFIQLPAEVKVETKSERNKNPLIILESCDKQLLGQVCSKIRSFRKPEPYKGKGIKFVGEVIRRKSGKSAGAK.

It belongs to the universal ribosomal protein uL6 family. As to quaternary structure, part of the 50S ribosomal subunit.

Functionally, this protein binds to the 23S rRNA, and is important in its secondary structure. It is located near the subunit interface in the base of the L7/L12 stalk, and near the tRNA binding site of the peptidyltransferase center. This is Large ribosomal subunit protein uL6 from Bacteroides thetaiotaomicron (strain ATCC 29148 / DSM 2079 / JCM 5827 / CCUG 10774 / NCTC 10582 / VPI-5482 / E50).